The primary structure comprises 266 residues: Glutamate racemase (266 aa).

Residues 10–11 (DS) and 42–43 (YG) contribute to the substrate site. The Proton donor/acceptor role is filled by Cys73. 74 to 75 (NT) provides a ligand contact to substrate. The active-site Proton donor/acceptor is Cys183. 184 to 185 (TH) serves as a coordination point for substrate.

This sequence belongs to the aspartate/glutamate racemases family.

It catalyses the reaction L-glutamate = D-glutamate. It functions in the pathway cell wall biogenesis; peptidoglycan biosynthesis. Its function is as follows. Provides the (R)-glutamate required for cell wall biosynthesis. In Lactobacillus johnsonii (strain CNCM I-12250 / La1 / NCC 533), this protein is Glutamate racemase.